We begin with the raw amino-acid sequence, 342 residues long: Glycerol-3-phosphate dehydrogenase [NAD(P)+] (342 aa).

The NADPH site is built by Trp-11, Arg-33, and Lys-112. Sn-glycerol 3-phosphate-binding residues include Lys-112, Gly-147, and Ser-149. Ala-151 contributes to the NADPH binding site. Residues Lys-202, Asp-255, Ser-265, Arg-266, and Asn-267 each contribute to the sn-glycerol 3-phosphate site. Residue Lys-202 is the Proton acceptor of the active site. NADPH is bound at residue Arg-266. Positions 290 and 292 each coordinate NADPH.

Belongs to the NAD-dependent glycerol-3-phosphate dehydrogenase family.

Its subcellular location is the cytoplasm. It catalyses the reaction sn-glycerol 3-phosphate + NAD(+) = dihydroxyacetone phosphate + NADH + H(+). The catalysed reaction is sn-glycerol 3-phosphate + NADP(+) = dihydroxyacetone phosphate + NADPH + H(+). Its pathway is membrane lipid metabolism; glycerophospholipid metabolism. Its function is as follows. Catalyzes the reduction of the glycolytic intermediate dihydroxyacetone phosphate (DHAP) to sn-glycerol 3-phosphate (G3P), the key precursor for phospholipid synthesis. The sequence is that of Glycerol-3-phosphate dehydrogenase [NAD(P)+] from Cupriavidus metallidurans (strain ATCC 43123 / DSM 2839 / NBRC 102507 / CH34) (Ralstonia metallidurans).